Reading from the N-terminus, the 171-residue chain is NADP-reducing hydrogenase subunit HndA (171 aa).

4 residues coordinate [2Fe-2S] cluster: Cys-98, Cys-103, Cys-139, and Cys-143.

This sequence belongs to the complex I 24 kDa subunit family. In terms of assembly, heterotetramer composed of HndA, HndB, HndC and HndD subunits. HndA and HndB could form a heterodimeric intermediate in the electron transfer between the active site of hydrogenase subunit HndD and the NADP reduction site of the reducing subunit HndC. The cofactor is [2Fe-2S] cluster.

The enzyme catalyses H2 + NADP(+) = NADPH + H(+). Inhibited by oxygen. Its function is as follows. Catalyzes the reduction of NADP in the presence of molecular H(2) to yield NADPH. The chain is NADP-reducing hydrogenase subunit HndA (hndA) from Solidesulfovibrio fructosivorans (Desulfovibrio fructosivorans).